Here is a 672-residue protein sequence, read N- to C-terminus: Protein seu-1 (672 aa).

Disordered stretches follow at residues 1–463 and 576–672; these read MSSI…AGTE and LAPP…LKHL. Over residues 8 to 20 the composition is skewed to basic and acidic residues; sequence NDNRRPTFRDHRT. Over residues 25–34 the composition is skewed to gly residues; it reads GRGGSGGGGR. The span at 62 to 85 shows a compositional bias: basic and acidic residues; sequence RSQDHRQRSPEVRRHRSPEKESKD. A compositionally biased stretch (low complexity) spans 87 to 105; sequence VVTSTGSSRGATSASVTSS. Basic and acidic residues-rich tracts occupy residues 107-138, 189-226, 234-268, and 289-306; these read RRHE…DADR, VSRH…KSNG, RRRE…KVED, and EQAK…ESHQ. Residues 307–317 are compositionally biased toward low complexity; sequence SAHSAAVSNAS. Acidic residues predominate over residues 322-343; it reads SEEELDYEEDDIDVDLDGDIDV. 6 stretches are compositionally biased toward basic and acidic residues: residues 366–375, 382–396, 410–424, 436–447, 607–626, and 636–659; these read NDVKDETMEE, PEKK…DDKD, RRED…SDHH, RATDHKESRRSE, SFGD…RHMD, and DHRV…ERGF.

In terms of tissue distribution, highly expressed in intestinal cells, lateral hypodermal (seam) cells, Pn.p ventral hypodermal cells, and spermatheca. Expressed at low levels in the ventral nerve cord.

Its subcellular location is the nucleus. Its function is as follows. Together with unc-5, involved in touch neuron axon guidance. During gonad morphogenesis, plays a role in the unc-5-/unc-6-mediated migration of distal tip cells along the body. This is Protein seu-1 from Caenorhabditis elegans.